The chain runs to 455 residues: Probable glycine dehydrogenase (decarboxylating) subunit 1 (455 aa).

The protein belongs to the GcvP family. N-terminal subunit subfamily. The glycine cleavage system is composed of four proteins: P, T, L and H. In this organism, the P 'protein' is a heterodimer of two subunits.

It carries out the reaction N(6)-[(R)-lipoyl]-L-lysyl-[glycine-cleavage complex H protein] + glycine + H(+) = N(6)-[(R)-S(8)-aminomethyldihydrolipoyl]-L-lysyl-[glycine-cleavage complex H protein] + CO2. In terms of biological role, the glycine cleavage system catalyzes the degradation of glycine. The P protein binds the alpha-amino group of glycine through its pyridoxal phosphate cofactor; CO(2) is released and the remaining methylamine moiety is then transferred to the lipoamide cofactor of the H protein. The sequence is that of Probable glycine dehydrogenase (decarboxylating) subunit 1 from Francisella tularensis subsp. novicida (strain U112).